Reading from the N-terminus, the 198-residue chain is ATP-dependent Clp protease proteolytic subunit 1 (198 aa).

Serine 96 functions as the Nucleophile in the catalytic mechanism. Histidine 121 is a catalytic residue.

The protein belongs to the peptidase S14 family. In terms of assembly, fourteen ClpP subunits assemble into 2 heptameric rings which stack back to back to give a disk-like structure with a central cavity, resembling the structure of eukaryotic proteasomes.

It is found in the cytoplasm. The catalysed reaction is Hydrolysis of proteins to small peptides in the presence of ATP and magnesium. alpha-casein is the usual test substrate. In the absence of ATP, only oligopeptides shorter than five residues are hydrolyzed (such as succinyl-Leu-Tyr-|-NHMec, and Leu-Tyr-Leu-|-Tyr-Trp, in which cleavage of the -Tyr-|-Leu- and -Tyr-|-Trp bonds also occurs).. Cleaves peptides in various proteins in a process that requires ATP hydrolysis. Has a chymotrypsin-like activity. Plays a major role in the degradation of misfolded proteins. This is ATP-dependent Clp protease proteolytic subunit 1 from Synechocystis sp. (strain ATCC 27184 / PCC 6803 / Kazusa).